Here is a 486-residue protein sequence, read N- to C-terminus: Cardiolipin synthase A (486 aa).

2 helical membrane-spanning segments follow: residues 3 to 23 and 38 to 58; these read TFYTVLSWLTFFFYWLLIAGV and MTWLLIIYILPLVGVIAYFAF. 2 consecutive PLD phosphodiesterase domains span residues 219 to 246 and 399 to 426; these read MDLRQHRKIVLIDNYISYTGSMNMVDPR and EDGLLHTKSVMVDGQLSMVGSVNLDMRS. Active-site residues include H224, K226, D231, H404, K406, and D411.

Belongs to the phospholipase D family. Cardiolipin synthase subfamily. ClsA sub-subfamily.

It localises to the cell inner membrane. It carries out the reaction 2 a 1,2-diacyl-sn-glycero-3-phospho-(1'-sn-glycerol) = a cardiolipin + glycerol. Functionally, catalyzes the reversible phosphatidyl group transfer from one phosphatidylglycerol molecule to another to form cardiolipin (CL) (diphosphatidylglycerol) and glycerol. The sequence is that of Cardiolipin synthase A from Proteus mirabilis (strain HI4320).